We begin with the raw amino-acid sequence, 153 residues long: Large ribosomal subunit protein uL15 (153 aa).

The interval 21 to 41 (RGIGSGKGKTGGRGIKGQKSR) is disordered. Residues 23-35 (IGSGKGKTGGRGI) are compositionally biased toward gly residues.

Belongs to the universal ribosomal protein uL15 family. Part of the 50S ribosomal subunit.

In terms of biological role, binds to the 23S rRNA. This Rickettsia felis (strain ATCC VR-1525 / URRWXCal2) (Rickettsia azadi) protein is Large ribosomal subunit protein uL15.